The primary structure comprises 668 residues: Fructose-1,6-bisphosphatase class 3 (668 aa).

This sequence belongs to the FBPase class 3 family. It depends on Mn(2+) as a cofactor.

The enzyme catalyses beta-D-fructose 1,6-bisphosphate + H2O = beta-D-fructose 6-phosphate + phosphate. Its pathway is carbohydrate biosynthesis; gluconeogenesis. The sequence is that of Fructose-1,6-bisphosphatase class 3 from Clostridium botulinum (strain ATCC 19397 / Type A).